A 310-amino-acid polypeptide reads, in one-letter code: Olfactory receptor 5AR1 (310 aa).

The Extracellular portion of the chain corresponds to 1–28; that stretch reads MDKENSSMVTEFIFMGITQDPQMEIIFF. Asn5 carries N-linked (GlcNAc...) asparagine glycosylation. The chain crosses the membrane as a helical span at residues 29–49; it reads VVFLIVYLVNVVGNIGMIILI. The Cytoplasmic portion of the chain corresponds to 50 to 58; that stretch reads TTDTQLHTP. Residues 59-79 form a helical membrane-spanning segment; it reads MYFFLCNLSFVDLGYSSAIAP. At 80–100 the chain is on the extracellular side; it reads RMLADFLTNHKVISFSSCATQ. A disulfide bond links Cys97 and Cys189. Residues 101-120 form a helical membrane-spanning segment; that stretch reads FAFFVGFVDAECYVLAAMAY. Residues 121 to 139 lie on the Cytoplasmic side of the membrane; it reads GRFVAICRPLHYSTFMSKQ. The helical transmembrane segment at 140–160 threads the bilayer; it reads VCLALMLGSYLAGLVSLVAHT. At 161 to 205 the chain is on the extracellular side; sequence TLTFSLSYCGSNIINHFFCEIPPLLALSCSDTYISEILLFSLCGF. A helical transmembrane segment spans residues 206-226; the sequence is IEFSTILIIFISYTFILVAII. The Cytoplasmic portion of the chain corresponds to 227 to 239; the sequence is RMRSAEGRLKAFS. The chain crosses the membrane as a helical span at residues 240–260; it reads TCGSHLTGITLFYGTVMFMYL. Residues 261-271 are Extracellular-facing; sequence RPTSSYSLDQD. The helical transmembrane segment at 272-292 threads the bilayer; the sequence is KWASVFYTVIIPMLNPLIYSL. The Cytoplasmic portion of the chain corresponds to 293 to 310; it reads RNKDVKAAFKKLIGKKSQ.

The protein belongs to the G-protein coupled receptor 1 family.

Its subcellular location is the cell membrane. Its function is as follows. Odorant receptor. The sequence is that of Olfactory receptor 5AR1 from Homo sapiens (Human).